The primary structure comprises 903 residues: MASVELEQQVDDLTVSKVTPFVEKNIDELNSLVQLMFTPSAPDIHCTQKLSKSQNTKLIQYKIRLEKTRSRILVLIDNYITHEEKLSHFLGLLDRIDDILTTIKIMSGEDEELNFTLPPTTNNNNNNTTNVLESSSDSDYDIIQPREFLKKSKPNLILSTKNSLSSLLKRKKSKNQITTTTTTTTTTANNNNTRRNRNNNNNNNNNANGANRTIDTSSEDDDESISSSDDDIVIGSRRSRAATISYLPNVPRANPTPINGRTPTPSHNFEPFTINTFLNSVNGVNKTSTTSTTTTTTTTTTAAGRTNKTVNRNNNNNNNNNNNKRFEIESEEESETDISSEEEENNNNNNNNSNNNNNSNNNNNLKLKTKSMSFTKNGIPLKIRSRINSESESEPENQLAESYELGKCQRKHISTPSLRLSSAHLPNTTTTTTTTTTTTTTTTSPKSVNNNDDDESSDSDSSDSEIENIKQTIKKNNGPPSPMTTEIIIGYSGHSKRLCNRYSLPTVQKSFTKQQLHEEIINFGRTPSRIKQSFLKPVNGDAELVFEYDDSEEEEEEEEEEEGEESDSESSSGSEGEVIVESFGIEKKVLRQYIKLKKEMEDRKKVSTKLEEPVECKICYMEYDQSNEVFTLECDHVYCFDCITEHLRILITEGRVLDISCPHPQCKKEIKESEIYMLTNEKNWLKYQKFSMIASLKTEPIKWCPTPDCDTPVRGGSERNPILNCPKCSNDFCWICGEYSHEGAKCGTEAMELQGRKNKSIESAATAYIDFLESNKHFVKPCPTCKSHIEKHDGCNHMTCINCQHQFCWLCMNPYQSGHYSSNEYPECFDRQYYSPFVPDTYTPPPPRRRHRKLKMAKKITLYTAAFTVGAPLLLIGGAVLLCVKIHKHRKNRARRNRNVGLY.

Disordered stretches follow at residues 115–137 (FTLP…SSSD), 167–236 (LLKR…VIGS), 284–366 (VNKT…NNLK), 415–487 (TPSL…TTEI), and 549–576 (DDSE…GSEG). Composition is skewed to low complexity over residues 120-130 (TTNNNNNNTTN) and 178-216 (TTTT…TIDT). Residues 217–232 (SSEDDDESISSSDDDI) are compositionally biased toward acidic residues. Composition is skewed to low complexity over residues 287-301 (TSTT…TTTT) and 311-323 (NRNN…NNNN). Residues 313–352 (NNNNNNNNNNNKRFEIESEEESETDISSEEEENNNNNNNN) are a coiled coil. Acidic residues predominate over residues 329 to 345 (ESEEESETDISSEEEEN). Over residues 346–364 (NNNNNNNSNNNNNSNNNNN) the composition is skewed to low complexity. The segment covering 415–427 (TPSLRLSSAHLPN) has biased composition (polar residues). The segment covering 428–443 (TTTTTTTTTTTTTTTT) has biased composition (low complexity). 2 stretches are compositionally biased toward acidic residues: residues 451 to 466 (NDDD…DSEI) and 549 to 568 (DDSE…ESDS). Positions 542–569 (AELVFEYDDSEEEEEEEEEEEGEESDSE) form a coiled coil. The tract at residues 612–832 (EPVECKICYM…NEYPECFDRQ (221 aa)) is TRIAD supradomain. Residues cysteine 616, cysteine 619, cysteine 634, histidine 636, cysteine 639, cysteine 642, cysteine 661, cysteine 666, cysteine 704, cysteine 709, cysteine 725, cysteine 728, cysteine 733, cysteine 736, histidine 741, cysteine 746, cysteine 782, and cysteine 785 each contribute to the Zn(2+) site. An RING-type 1 zinc finger spans residues 616-666 (CKICYMEYDQSNEVFTLECDHVYCFDCITEHLRILITEGRVLDISCPHPQC). The IBR-type zinc finger occupies 683-746 (NWLKYQKFSM…GEYSHEGAKC (64 aa)). Residues 782-811 (CPTCKSHIEKHDGCNHMTCINCQHQFCWLC) form an RING-type 2; atypical zinc finger. Cysteine 795 is a catalytic residue. Residues cysteine 800, cysteine 803, cysteine 808, cysteine 811, histidine 819, and cysteine 828 each coordinate Zn(2+). Residues 864–884 (TAAFTVGAPLLLIGGAVLLCV) traverse the membrane as a helical segment.

The protein belongs to the RBR family. RNF14 subfamily.

The protein localises to the membrane. It carries out the reaction [E2 ubiquitin-conjugating enzyme]-S-ubiquitinyl-L-cysteine + [acceptor protein]-L-lysine = [E2 ubiquitin-conjugating enzyme]-L-cysteine + [acceptor protein]-N(6)-ubiquitinyl-L-lysine.. It functions in the pathway protein modification; protein ubiquitination. E3 ubiquitin-protein ligase. The sequence is that of E3 ubiquitin-protein ligase DDB_G0292642 from Dictyostelium discoideum (Social amoeba).